Consider the following 402-residue polypeptide: Queuine tRNA-ribosyltransferase-like protein (402 aa).

This sequence belongs to the queuine tRNA-ribosyltransferase family.

This Theileria parva (East coast fever infection agent) protein is Queuine tRNA-ribosyltransferase-like protein.